We begin with the raw amino-acid sequence, 286 residues long: Phosphatidylserine decarboxylase proenzyme (286 aa).

Residues D90, H147, and S252 each act as charge relay system; for autoendoproteolytic cleavage activity in the active site. The Schiff-base intermediate with substrate; via pyruvic acid; for decarboxylase activity role is filled by S252. At S252 the chain carries Pyruvic acid (Ser); by autocatalysis.

The protein belongs to the phosphatidylserine decarboxylase family. PSD-B subfamily. Prokaryotic type I sub-subfamily. Heterodimer of a large membrane-associated beta subunit and a small pyruvoyl-containing alpha subunit. Requires pyruvate as cofactor. In terms of processing, is synthesized initially as an inactive proenzyme. Formation of the active enzyme involves a self-maturation process in which the active site pyruvoyl group is generated from an internal serine residue via an autocatalytic post-translational modification. Two non-identical subunits are generated from the proenzyme in this reaction, and the pyruvate is formed at the N-terminus of the alpha chain, which is derived from the carboxyl end of the proenzyme. The autoendoproteolytic cleavage occurs by a canonical serine protease mechanism, in which the side chain hydroxyl group of the serine supplies its oxygen atom to form the C-terminus of the beta chain, while the remainder of the serine residue undergoes an oxidative deamination to produce ammonia and the pyruvoyl prosthetic group on the alpha chain. During this reaction, the Ser that is part of the protease active site of the proenzyme becomes the pyruvoyl prosthetic group, which constitutes an essential element of the active site of the mature decarboxylase.

The protein resides in the cell membrane. The catalysed reaction is a 1,2-diacyl-sn-glycero-3-phospho-L-serine + H(+) = a 1,2-diacyl-sn-glycero-3-phosphoethanolamine + CO2. The protein operates within phospholipid metabolism; phosphatidylethanolamine biosynthesis; phosphatidylethanolamine from CDP-diacylglycerol: step 2/2. Its function is as follows. Catalyzes the formation of phosphatidylethanolamine (PtdEtn) from phosphatidylserine (PtdSer). This is Phosphatidylserine decarboxylase proenzyme from Ectopseudomonas mendocina (strain ymp) (Pseudomonas mendocina).